Reading from the N-terminus, the 491-residue chain is Cytochrome P450 monooxygenase olcB (491 aa).

Residues 5–27 traverse the membrane as a helical segment; that stretch reads LLLSLSVCLLYVFITAFWNLYIH. Cysteine 435 lines the heme pocket.

It belongs to the cytochrome P450 family. Requires heme as cofactor.

The protein resides in the membrane. It participates in secondary metabolite biosynthesis; terpenoid biosynthesis. Functionally, cytochrome P450 monooxygenase; part of the gene cluster that mediates the biosynthesis of 15-deoxyoxalicine B. The first step of the pathway is the synthesis of nicotinyl-CoA from nicotinic acid by the nicotinic acid-CoA ligase olcI. Nicotinyl-CoA is then a substrate of polyketide synthase olcA to produce 4-hydroxy-6-(3-pyridinyl)-2H-pyran-2-one (HPPO) which is further prenylated by the polyprenyl transferase olcH to yield geranylgeranyl-HPPO. Geranylgeranyl pyrophosphate is provided by the cluster-specific geranylgeranyl pyrophosphate synthase olcC. The FAD-dependent monooxygenase olcE catalyzes the epoxidation of geranylgeranyl-HPPO and the terpene cyclase olcD catalyzes the cyclization of the terpenoid component, resulting in the formation of the tricyclic terpene moiety seen in predecaturin E. The cytochrome P450 monooxygenase then catalyzes the allylic oxidation of predecaturin E, which is followed by spirocylization with concomitant loss of one molecule of water to form decaturin E. Decaturin E is the substrate of the cytochrome P450 monooxygenase olcJ which hydroxylates it at the C-29 position to form decaturin F. The short-chain dehydrogenase/reductase olcF may catalyze the oxidation of decaturin F to generate the 29-hydroxyl-27-one intermediate, and subsequent hemiacetal formation probably leads to the formation of decaturin C. The dioxygenase olcK may be a peroxisomal enzyme that catalyzes the hydroxylation of decaturin C into decaturin A once decaturin C is shuttled into the peroxisome by the MFS transporter olcL. Finally the cytochrome P450 monooxygenase olcB catalyzes the oxidative rearrangement to yield 15-deoxyoxalicine B. In the absence of olcJ, decaturin E may be shunted to a pathway in which it is oxidized to a ketone, possibly by olcF, to form decaturin D, which undergoes further allylic oxidation to yield decaturin G. Moreover, in the absence of oclK or oclL, oclB can convert decaturin C into 15-deoxyoxalicine A. The polypeptide is Cytochrome P450 monooxygenase olcB (Penicillium canescens).